Consider the following 109-residue polypeptide: Spermidine export protein MdtI (109 aa).

The next 4 membrane-spanning stretches (helical) occupy residues 6 to 26 (FYPIAFLILAVMLEIVANILL), 36 to 56 (WLGILSLLSVLGAFSALAQAV), 64 to 84 (AYALWGGFGIAATVAAGWILF), and 88 to 108 (LNYKGWIGLILLLAGMVMIKL).

This sequence belongs to the drug/metabolite transporter (DMT) superfamily. Small multidrug resistance (SMR) (TC 2.A.7.1) family. MdtI subfamily. Forms a complex with MdtJ.

The protein localises to the cell inner membrane. Functionally, catalyzes the excretion of spermidine. The sequence is that of Spermidine export protein MdtI from Yersinia pseudotuberculosis serotype O:1b (strain IP 31758).